The following is an 843-amino-acid chain: Respiratory burst oxidase homolog protein B (843 aa).

Acidic residues predominate over residues 1-10 (MREEEMESSS). A disordered region spans residues 1–27 (MREEEMESSSEGETNKISRCKATGSDN). The Cytoplasmic segment spans residues 1 to 297 (MREEEMESSS…SYFFLENWKR (297 aa)). EF-hand-like stretches follow at residues 114 to 122 (AVEGKLPKS) and 148 to 159 (RGTTSSSITKTE). 2 EF-hand domains span residues 171–206 (SFDD…SASA) and 215–250 (NVDE…VPSQ). Ca(2+)-binding residues include aspartate 184, asparagine 186, aspartate 188, arginine 190, and glutamate 195. The residue at position 268 (serine 268) is a Phosphoserine. A helical transmembrane segment spans residues 298–318 (IWVLTLWISICITLFTWKFLQ). Over 319–383 (YKRKTVFEVM…FDDNINFHKV (65 aa)) the chain is Extracellular. In terms of domain architecture, Ferric oxidoreductase spans 336-495 (KGSAETLKFN…LFVIVYVLLI (160 aa)). A helical transmembrane segment spans residues 384–404 (VAFGIAVGIGLHAISHLACDF). At 405 to 439 (PRLLHAKNVEFEPMKKFFGDERPENYGWFMKGTDG) the chain is on the cytoplasmic side. A helical membrane pass occupies residues 440–460 (WTGVTMVVLMLVAYVLAQSWF). The Extracellular portion of the chain corresponds to 461 to 482 (RRNRANLPKSLKRLTGFNAFWY). A helical membrane pass occupies residues 483–503 (SHHLFVIVYVLLIVHGYFVYL). Residues 504–511 (SKEWYHKT) are Cytoplasmic-facing. The chain crosses the membrane as a helical span at residues 512–529 (TWMYLAVPVLLYAFERLI). Residues 530–659 (RAFRPGAKAV…PYGAPAQDYR (130 aa)) are Extracellular-facing. The FAD-binding FR-type domain occupies 534 to 657 (PGAKAVKVLK…DGPYGAPAQD (124 aa)). Residues 660 to 680 (NYDVLLLVGLGIGATPLISII) form a helical membrane-spanning segment. Over 681–843 (RDVLNNIKNQ…TKFEFHKENF (163 aa)) the chain is Cytoplasmic.

Belongs to the RBOH (TC 5.B.1.3) family. In terms of assembly, monomer and homodimer.

It localises to the membrane. Calcium-dependent NADPH oxidase that generates superoxide. This Arabidopsis thaliana (Mouse-ear cress) protein is Respiratory burst oxidase homolog protein B (RBOHB).